Consider the following 738-residue polypeptide: Glucan 1,4-alpha-glucosidase SusB (738 aa).

Positions 1 to 21 (MKKRKILSLIAFLCISFIANA) are cleaved as a signal peptide. Glu194 is a Ca(2+) binding site. Substrate contacts are provided by residues 215–217 (PNS), 437–439 (HHE), and 507–508 (HE). Glu508, Glu526, and Glu532 together coordinate Ca(2+). Glu532 (proton donor/acceptor) is an active-site residue.

This sequence belongs to the glycosyl hydrolase 97 family. In terms of assembly, monomer. Ca(2+) serves as cofactor.

It is found in the periplasm. The catalysed reaction is Hydrolysis of terminal (1-&gt;4)-linked alpha-D-glucose residues successively from non-reducing ends of the chains with release of beta-D-glucose.. It participates in glycan degradation; starch degradation. Its function is as follows. Glucoamylase that hydrolyzes alpha-1,4-glucosidic linkages, alpha-1,6-, alpha-1,3- and alpha-1,2-glucosidic linkages during starch degradation. The polypeptide is Glucan 1,4-alpha-glucosidase SusB (susB) (Bacteroides thetaiotaomicron (strain ATCC 29148 / DSM 2079 / JCM 5827 / CCUG 10774 / NCTC 10582 / VPI-5482 / E50)).